The chain runs to 431 residues: MSLHVKGPVCQTCGDIGFEEALVFCDSCMFESIHRYCLGITPIPFTEYITWICEDCDNSESDSDCNEVDQTVKKKKKSRNQPLVVLAEDNVLQEPLEGSKREESSCSRKPHELTCLDGNGESVLEAADSSSVPDHSSCTSKRKEVDQTANLGHILERSEKKKKKKKKKKSINHSPPVLAVEDHELQGTTNVVEPVEVSSSSPTKETMESKRQESSDSRKPHELTCLVGDSETANSSSVPEHNSCAVKKRKLSSGNKQIQLADGSSSCRVAESNMPLTLTSRNYRAQPIKIPIWRGLMSVKGGNSCTMDGIVAHVSSLACPKVHETASSLKGRLSAEILPRLEVWPKTFLKNGGPKDESVALFFFPSSESNDEKVFDSLVDKMKKNDSAMRCVLNDAELLLFTSYMLPKDSWTFNSKYYLWGVFKPRQTSRY.

Residues G7–S59 form a PHD-type zinc finger. 8 residues coordinate Zn(2+): C10, C13, C25, C28, H34, C37, C53, and C56. The disordered stretch occupies residues E125–H221. Positions D128–T139 are enriched in polar residues. Over residues K160–I171 the composition is skewed to basic residues. Residues V191–P202 are compositionally biased toward low complexity. The span at E205–H221 shows a compositional bias: basic and acidic residues.

In terms of assembly, interacts directly with AIPP3/BDT1.

In terms of biological role, together with AIPP3/BDT1, cooperates to form a BAH-PHD bivalent histone reader complex able to read histone H3 lysine 27 trimethylation (H3K27me3) histone marks in order to regulate transcription, especially to prevent early flowering; promotes AIPP3/BDT1 binding to H3K27me3. The polypeptide is PHD finger-containing protein 1 (Arabidopsis thaliana (Mouse-ear cress)).